The sequence spans 270 residues: Tetraspanin-18 (270 aa).

The Cytoplasmic segment spans residues 1-15 (MRRNCCHVSFASTLK). Residues 16–36 (ILNFVQAFIGVSIIIYSIWML) form a helical membrane-spanning segment. Residues 37–99 (HEYSRHLPVD…LRSLDLPAPW (63 aa)) are Extracellular-facing. Residues 100–120 (FIYSFMAVGILVCIVTFIGFI) traverse the membrane as a helical segment. Over 121-132 (AAEAINGCCLCF) the chain is Cytoplasmic. A helical transmembrane segment spans residues 133-153 (YSILKTLLILLEAALVAYIAI). Residues 154–183 (DRHWEKDLPYDPTGELSSLRAFIEENIDIC) lie on the Extracellular side of the membrane. A helical transmembrane segment spans residues 184-204 (KWVGIAVVAVQLLSLLLAMVL). The Cytoplasmic portion of the chain corresponds to 205–270 (RAMVSTPKPE…NQSPPVNPKG (66 aa)). The tract at residues 212-249 (KPELDEEEDDENPRSRTWDPLLGPQGNQAPAGSSKIEN) is disordered. Polar residues predominate over residues 236 to 249 (QGNQAPAGSSKIEN). The residue at position 245 (S245) is a Phosphoserine.

The protein belongs to the tetraspanin (TM4SF) family. Homodimer. Constituent of tobamovirus replication complex. As to expression, expressed in rosette leaves.

Its subcellular location is the membrane. It is found in the vacuole membrane. In terms of biological role, may be involved in the regulation of cell differentiation. Promotes intracellular multiplication of tobamoviruses, probably being a component of the replication complex. The chain is Tetraspanin-18 (TOM2AH2) from Arabidopsis thaliana (Mouse-ear cress).